Consider the following 246-residue polypeptide: tRNA (guanine-N(7)-)-methyltransferase (246 aa).

Positions 1 to 26 (MSDSSSSSENAPATPESPGRPPRGIK) are disordered. S-adenosyl-L-methionine-binding residues include Glu74, Glu99, Asp126, and Asp149. Asp149 is an active-site residue. Substrate is bound by residues Lys153, Asp185, and 224-227 (TKFE).

It belongs to the class I-like SAM-binding methyltransferase superfamily. TrmB family.

The enzyme catalyses guanosine(46) in tRNA + S-adenosyl-L-methionine = N(7)-methylguanosine(46) in tRNA + S-adenosyl-L-homocysteine. Its pathway is tRNA modification; N(7)-methylguanine-tRNA biosynthesis. Functionally, catalyzes the formation of N(7)-methylguanine at position 46 (m7G46) in tRNA. In Chromohalobacter salexigens (strain ATCC BAA-138 / DSM 3043 / CIP 106854 / NCIMB 13768 / 1H11), this protein is tRNA (guanine-N(7)-)-methyltransferase.